A 97-amino-acid polypeptide reads, in one-letter code: YcgL domain-containing protein Pmen_1774 (97 aa).

One can recognise a YcgL domain in the interval 3–87; that stretch reads RICSIYKSPR…PEEDYIQHLP (85 aa).

The chain is YcgL domain-containing protein Pmen_1774 from Ectopseudomonas mendocina (strain ymp) (Pseudomonas mendocina).